Here is a 339-residue protein sequence, read N- to C-terminus: Leucine-rich repeat-containing protein 75A (339 aa).

Positions 1–25 are disordered; it reads MGTRQTKGSLAERASPGAAPGPRRE. Positions 11–21 are enriched in low complexity; sequence AERASPGAAPG. LRR repeat units lie at residues 203-216 and 228-241; these read VDSV…LTDD and LPRL…GNRL. The disordered stretch occupies residues 294 to 339; sequence LPTILELGEGPGTGEEAREGTDQQDPIGSPVTPARGQESTECVIQT. The residue at position 322 (serine 322) is a Phosphoserine. Threonine 325 is subject to Phosphothreonine. Positions 330 to 339 are enriched in polar residues; that stretch reads QESTECVIQT.

The protein belongs to the LRRC75 family.

The protein is Leucine-rich repeat-containing protein 75A (Lrrc75a) of Mus musculus (Mouse).